A 144-amino-acid polypeptide reads, in one-letter code: Maximins 10/H3 (144 aa).

The N-terminal stretch at 1–18 (MNFKYIVAVSFLIASAYA) is a signal peptide. The propeptide occupies 19-43 (RSVKNDEQSLSQRDVLDEESLREFR). A Serine amide modification is found at serine 70. The propeptide occupies 74–123 (TAEDHEVMKRLEAVMRDLDSLDYPEEATERETRGFNQEEIANLFTKKEKR). Isoleucine 143 is subject to Isoleucine amide.

Belongs to the bombinin family. As to expression, expressed by the skin glands.

It localises to the secreted. Functionally, maximin-10 shows antimicrobial activity against bacteria and against the fungus C.albicans. It has little hemolytic activity. In terms of biological role, maximin-H3 shows antibacterial activity against both Gram-positive and Gram-negative bacteria. It also shows antimicrobial activity against the fungus C.albicans. Shows strong hemolytic activity. This Bombina maxima (Giant fire-bellied toad) protein is Maximins 10/H3.